The following is a 248-amino-acid chain: Homeobox protein Hox-A4 (248 aa).

Residues 23-107 (YQQSGYIPNP…PDGGAGANAS (85 aa)) form a disordered region. The span at 35–51 (YYERPKDTGFPHHDEPS) shows a compositional bias: basic and acidic residues. Residues 128–133 (VYPWMK) carry the Antp-type hexapeptide motif. Positions 149 to 208 (PKRSRTAYTRQQALELEKEFHFNRYLTRRRRVEIAHTMCLSERQVKIWFQNRRMKWKKEH) form a DNA-binding region, homeobox. A disordered region spans residues 207 to 248 (EHKLPNTKIRSSSSASSSASGAQQQQIKTGQQLVPTPCTAGL). The segment covering 217–238 (SSSSASSSASGAQQQQIKTGQQ) has biased composition (low complexity).

The protein belongs to the Antp homeobox family. Deformed subfamily.

The protein localises to the nucleus. Functionally, sequence-specific transcription factor which is part of a developmental regulatory system that provides cells with specific positional identities on the anterior-posterior axis. The polypeptide is Homeobox protein Hox-A4 (hoxa4) (Morone saxatilis (Striped bass)).